The chain runs to 316 residues: Vacuolar membrane protein YNL058C (316 aa).

Residues 32–60 (KPTSSVVSETSSKSLPSLTSSAFSTSSGA) are disordered. A helical membrane pass occupies residues 93-113 (VYIAVGAVIGAIFISILIWWL). Phosphoserine occurs at positions 148, 256, and 276. The segment at 240 to 304 (EEEERKLNLN…KAHKRQAPSM (65 aa)) is disordered. Residues 256 to 271 (SPERKEKKINSMEGYH) are compositionally biased toward basic and acidic residues.

It belongs to the PRM5 family.

It is found in the vacuole membrane. This is Vacuolar membrane protein YNL058C from Saccharomyces cerevisiae (strain ATCC 204508 / S288c) (Baker's yeast).